Consider the following 128-residue polypeptide: Holo-[acyl-carrier-protein] synthase (128 aa).

Residues Asp8 and Glu59 each coordinate Mg(2+).

This sequence belongs to the P-Pant transferase superfamily. AcpS family. Mg(2+) is required as a cofactor.

The protein resides in the cytoplasm. It catalyses the reaction apo-[ACP] + CoA = holo-[ACP] + adenosine 3',5'-bisphosphate + H(+). In terms of biological role, transfers the 4'-phosphopantetheine moiety from coenzyme A to a Ser of acyl-carrier-protein. In Rickettsia typhi (strain ATCC VR-144 / Wilmington), this protein is Holo-[acyl-carrier-protein] synthase.